We begin with the raw amino-acid sequence, 88 residues long: U-scoloptoxin(XY)-Er1b (88 aa).

The N-terminal stretch at 1–24 (MASQVVLSFALVVVLAVFVGQVDS) is a signal peptide. A disordered region spans residues 66 to 88 (RPELSPGALDDSSEEKDNEASLA). The propeptide occupies 79-88 (EEKDNEASLA).

It belongs to the scoloptoxin-XY family. In terms of processing, contains 3 disulfide bonds. In terms of tissue distribution, expressed by the venom gland.

The protein resides in the secreted. In Ethmostigmus rubripes (Giant centipede), this protein is U-scoloptoxin(XY)-Er1b.